Reading from the N-terminus, the 325-residue chain is Putative gluconeogenesis factor (325 aa).

Belongs to the gluconeogenesis factor family.

The protein localises to the cytoplasm. Functionally, required for morphogenesis under gluconeogenic growth conditions. This Streptococcus pyogenes serotype M1 protein is Putative gluconeogenesis factor.